The primary structure comprises 146 residues: Hemoglobin subunit beta (146 aa).

Positions 2–146 (HWTAEEKQLI…VAHALARKYH (145 aa)) constitute a Globin domain. The heme b site is built by histidine 63 and histidine 92.

Belongs to the globin family. In terms of assembly, heterotetramer of two alpha chains and two beta chains. In terms of tissue distribution, red blood cells.

In terms of biological role, involved in oxygen transport from the lung to the various peripheral tissues. This Anas platyrhynchos platyrhynchos (Northern mallard) protein is Hemoglobin subunit beta (HBB).